The chain runs to 73 residues: Serine rich endogenous peptide 14 (73 aa).

Residues 1-31 form the signal peptide; sequence MAAKTSNLVALLLSLFLLLLSISSQVGLGEA. Residues 44–73 form a disordered region; that stretch reads VSHPSPPPPHRSMAPPIFVPPSTSHKGQGP. An SCOOP motif motif is present at residues 59 to 73; that stretch reads PIFVPPSTSHKGQGP. Positions 64–73 are enriched in polar residues; that stretch reads PSTSHKGQGP. A SxS motif essential for MIK2 binding motif is present at residues 65 to 67; sequence STS.

Belongs to the serine rich endogenous peptide (SCOOP) phytocytokine family. In terms of assembly, interacts with MIK2 (via extracellular leucine-rich repeat domain); this interaction triggers the formation of complex between MIK2 and the BAK1/SERK3 and SERK4 coreceptors, and subsequent BAK1 activation by phosphorylation. In terms of tissue distribution, mostly expressed in seedlings shoots and leaves, and, to a lower extent, in roots, stems, siliques, seeds and flowers.

Its subcellular location is the cell membrane. The protein localises to the secreted. It localises to the extracellular space. The protein resides in the apoplast. In terms of biological role, brassicaceae-specific phytocytokine (plant endogenous peptide released into the apoplast) perceived by MIK2 in a BAK1/SERK3 and SERK4 coreceptors-dependent manner, that modulates various physiological and antimicrobial processes including growth prevention and reactive oxygen species (ROS) response regulation. Inhibits root growth and regulates root meristems. Prevents general growth and development. Exhibits antibacterial effects against Pseudomonas syringae pv. tomato DC3000, Ralstonia solanacearum, Bacillus subtilis and Agrobacterium tumefaciens, thus being an antimicrobial peptide (AMP). This is Serine rich endogenous peptide 14 from Arabidopsis thaliana (Mouse-ear cress).